The sequence spans 88 residues: Protein GOLVEN 10 (88 aa).

The first 22 residues, 1 to 22 (MSSIHVASMILLLFLFLHHSDS), serve as a signal peptide directing secretion. Residues 23–75 (RHLDNVHITASRFSLVKDQNVVSSSTSKEPVKVSRFVPGPLKHHHRRPPLLFA) constitute a propeptide that is removed on maturation. The disordered stretch occupies residues 44 to 88 (VSSSTSKEPVKVSRFVPGPLKHHHRRPPLLFADYPKPSTRPPRHN). Tyrosine 77 carries the post-translational modification Sulfotyrosine. Proline 85 carries the post-translational modification Hydroxyproline.

This sequence belongs to the RGF family. In terms of assembly, binds to LRR receptor-like serine/threonine-protein kinases RGI1, RGI2 and RGI3 to trigger their dimerization with SERK proteins and subsequent signaling. As to expression, expressed in roots, shoots, leaves and flowers.

The protein resides in the secreted. It localises to the endoplasmic reticulum. Its function is as follows. Signaling peptide (root growth factor) that maintains the postembryonic root stem cell niche. Regulates the pattern of root growth and lateral root development by modulating the length and the number of cortical cells in the root apical meristem (RAM), and the anticlinal asymmetric cell divisions in lateral root initiation cells. The polypeptide is Protein GOLVEN 10 (Arabidopsis thaliana (Mouse-ear cress)).